The chain runs to 427 residues: Serine protease inhibitor 88Ea (427 aa).

The signal sequence occupies residues 1-18 (MHILSISLMAVLPAIALA). The N-linked (GlcNAc...) asparagine glycan is linked to N224.

It belongs to the serpin family. As to expression, expressed in nurse cells and oocytes. Expressed in wings.

The protein localises to the secreted. Its function is as follows. Serine protease inhibitor with activity toward trypsin. Negatively regulates the Toll signaling pathway and suppresses the expression of the antifungal peptide drosomycin. Its negative regulation of the Toll signaling pathway also results in the inhibition of the melanization immune response via the phenoloxidase (PPO1) cascade. Essential for unfolding and expansion of the wings after emergence from the pupal case. May regulate the Toll pathway by blocking the proteolysis of the Toll ligand spz. This is Serine protease inhibitor 88Ea from Drosophila melanogaster (Fruit fly).